We begin with the raw amino-acid sequence, 825 residues long: IQ and AAA domain-containing protein 1-like (825 aa).

The IQ domain maps to 206–235; that stretch reads RDQGAIVIQKVWKGYLQRKRIEQDRRVEME. The segment covering 344 to 366 has biased composition (basic and acidic residues); the sequence is QAQESRKKDQEKKEKNKEKEKEK. Disordered stretches follow at residues 344 to 378 and 459 to 487; these read QAQESRKKDQEKKEKNKEKEKEKKEKKKKKVKEEK and DREETRPLKSPKKKGGKKSGKKKKEKDLT. Over residues 467-482 the composition is skewed to basic residues; the sequence is KSPKKKGGKKSGKKKK. Position 572 to 579 (572 to 579) interacts with ATP; the sequence is GPSGMGKK.

Belongs to the AAA ATPase family.

In Mus musculus (Mouse), this protein is IQ and AAA domain-containing protein 1-like (Iqca1l).